We begin with the raw amino-acid sequence, 4008 residues long: MGVLKVWLGLALALAEFAVLPHHSEGACVYQDSLLADATIWKPDSCQSCRCHGDIVICKPAVCRNPQCAFEKGEVLQIAANQCCPECVLRTPGSCHHEKKIHEHGTEWASSPCSVCSCNHGEVRCTPQPCPPLSCGHQELAFIPEGSCCPVCVGLGKPCSYEGHVFQDGEDWRLSRCAKCLCRNGVAQCFTAQCQPLFCNQDETVVRVPGKCCPQCSARSCSAAGQVYEHGEQWSENACTTCICDRGEVRCHKQACLPLRCGKGQSRARRHGQCCEECVSPAGSCSYDGVVRYQDEMWKGSACEFCMCDHGQVTCQTGECAKVECARDEELIHLDGKCCPECISRNGYCVYEETGEFMSSNASEVKRIPEGEKWEDGPCKVCECRGAQVTCYEPSCPPCPVGTLALEVKGQCCPDCTSVHCHPDCLTCSQSPDHCDLCQDPTKLLQNGWCVHSCGLGFYQAGSLCLACQPQCSTCTSGLECSSCQPPLLMRHGQCVPTCGDGFYQDRHSCAVCHESCAGCWGPTEKHCLACRDPLHVLRDGGCESSCGKGFYNRQGTCSACDQSCDSCGPSSPRCLTCTEKTVLHDGKCMSECPGGYYADATGRCKVCHNSCASCSGPTPSHCTACSPPKALRQGHCLPRCGEGFYSDHGVCKACHSSCLACMGPAPSHCTGCKKPEEGLQVEQLSDVGIPSGECLAQCRAHFYLESTGICEACHQSCFRCAGKSPHNCTDCGPSHVLLDGQCLSQCPDGYFHQEGSCTECHPTCRQCHGPLESDCISCYPHISLTNGNCRTSCREEQFLNLVGYCADCHHLCQHCAADLHNTGSICLRCQNAHYLLLGDHCVPDCPSGYYAERGACKKCHSSCRTCQGRGPFSCSSCDTNLVLSHTGTCSTTCFPGHYLDDNHVCQPCNTHCGSCDSQASCTSCRDPNKVLLFGECQYESCAPQYYLDFSTNTCKECDWSCSACSGPLKTDCLQCMDGYVLQDGACVEQCLSSFYQDSGLCKNCDSYCLQCQGPHECTRCKGPFLLLEAQCVQECGKGYFADHAKHKCTACPQGCLQCSHRDRCHLCDHGFFLKSGLCVYNCVPGFSVHTSNETCSGKIHTPSLHVNGSLILPIGSIKPLDFSLLNVQDQEGRVEDLLFHVVSTPTNGQLVLSRNGKEVQLDKAGRFSWKDVNEKKVRFVHSKEKLRKGYLFLKISDQQFFSEPQLINIQAFSTQAPYVLRNEVLHISRGERATITTQMLDIRDDDNPQDVVIEIIDPPLHGQLLQTLQSPATPIYQFQLDELSRGLLHYAHDGSDSTSDVAVLQANDGHSFHNILFQVKTVPQNDRGLQLVANSMVWVPEGGMLQITNRILQAEAPGASAEEIIYKITQDYPQFGEVVLLVNMPADSPADEGQHLPDGRTATPTSTFTQQDINEGIVWYRHSGAPAQSDSFRFEVSSASNAQTRLESHMFNIAILPQTPEAPKVSLEASLHMTAREDGLTVIQPHSLSFINSEKPSGKIVYNITLPLHPNQGIIEHRDHPHSPIRYFTQEDINQGKVMYRPPPAAPHLQELMAFSFAGLPESVKFHFTVSDGEHTSPEMVLTIHLLPSDQQLPVFQVTAPRLAVSPGGSTSVGLQVVVRDAETAPKELFFELRRPPQHGVLLKHTAEFRRPMATGDTFTYEDVEKNALQYIHDGSSTREDSMEISVTDGLTVTMLEVRVEVSLSEDRGPRLAAGSSLSITVASKSTAIITRSHLAYVDDSSPDPEIWIQLNYLPSYGTLLRISGSEVEELSEVSNFTMEDINNKKIRYSAVFETDGHLVTDSFYFSVSDMDHNHLDNQIFTIMITPAENPPPVIAFADLITVDEGGRAPLSFHHFFATDDDDNLQRDAIIKLSALPKYGCIENTGTGDRFGPETASDLEASFPIQDVLENYIYYFQSVHESIEPTHDIFSFYVSDGTSRSEIHSINITIERKNDEPPRMTLQPLRVQLSSGVVISNSSLSLQDLDTPDNELIFVLTKKPDHGHVLWRQTASEPLENGRVLVQGSTFTYQDILAGLVGYVPSVPGMVVDEFQFSLTDGLHVDTGRMKIYTELPASDTPHLAINQGLQLSAGSVARITEQHLKVTDIDSDDHQVMYIMKEDPGAGRLQMMKHGNLEQISIKGPIRSFTQADISQGQPEYSHGTGEPGGSFAFKFDVVDGEGNRLIDKSFSISISEDKSPPVITTNKGLVLDENSVKKITTLQLSATDQDSGPTELIYRITRQPQLGHLEHAASPGIQISSFTQADLTSRNVQYVHSSEAEKHSDAFSFTLSDGVSEVTQTFHITLHPVDDSLPVVQNLGMRVQEGMRKTITEFELKAVDADTEAESVTFTIVQPPRHGTIERTSNGQHFHLTSTFTMKDIYQNRVSYSHDGSNSLKDRFTFTVSDGTNPFFIIEEGGKEIMTAAPQPFRVDILPVDDGTPRIVTNLGLQWLEYMDGKATNLITKKELLTMDPDTEDAQLVYEITTGPKHGFVENKLQPGRAAATFTQEDVNLGLIRYVLHKEKIREMMDSFQFLVKDSKPNVVSDNVFHIQWSLISFKYTSYNVSEKAGSVSVTVQRTGNLNQYAIVLCRTEQGTASSSSQPGQQDYVEYAGQVQFDEREDTKSCTIVINDDDVFENVESFTVELSMPAYALLGEFTQAKVIINDTEDEPTLEFDKKIYWVNESAGFLFAPIERKGDASSIVSAICYTVPKSAMGSLFYALESGSDFKSRGMSAASRVIFGPGVTMSTCDVMLIDDSEYEEEEEFEIALADASDNARIGRVATAKVLISGPNDASTVSLGNTAFTVSEDAGTVKIPVIRHGTDLSTFASVWCATRPSDPASATPGVDYVPSSRKVEFGPGVIEQYCTLTILDDTQYPVIEGLETFVVFLSSAQGAELTKPFQAVIAINDTFQDVPSMQFAKDLLLVKEKEGVLHVPITRSGDLSYESSVRCYTQSHSAQVMEDFEERQNADSSRITFLKGDKVKNCTVYIHDDSMFEPEEQFRVYLGLPLGNHWSGARIGKNNMATITISNDEDAPTIEFEEAAYQVREPAGPDAIAILNIKVIRRGDQNRTSKVRCSTRDGSAQSGVDYYPKSRVLKFSPGVDHIFFKVEILSNEDREWHESFSLVLGPDDPVEAVLGDVTTATVTILDQEAAGSLILPAPPIVVTLADYDHVEEVTKEGVKKSPSPGYPLVCVTPCDPHFPRYAVMKERCSEAGINQTSVQFSWEVAAPTDGNGARSPFETITDNTPFTSVNHMVLDSIYFSRRFHVRCVAKAVDKVGHVGTPLRSNIVTIGTDSAICHTPVVAGTSRGFQAQSFIATLKYLDVKHKEHPNRIHISVQIPHQDGMLPLISTMPLHNLHFLLSESIYRHQHVCSNLVTTYDLRGLAEAGFLDDVVYDSTALGPGYDRPFQFDPSVREPKTIQLYKHLNLKSCVWTFDAYYDMTELIDVCGGSVTADFQVRDSAQSFLTVHVPLYVSYIYVTAPRGWASLEHHTEMEFSFFYDTVLWRTGIQTDSVLSARLQIIRIYIREDGRLVIEFKTHAKFRGQFVMEHHTLPEVKSFVLTPDHLGGIEFDLQLLWSAQTFDSPHQLWRATSSYNRKDYSGEYTIYLIPCTVQPTQPWVDPGEKPLACTAHAPERFLIPIAFQQTNRPVPVVYSLNTEFQLCNNEKVFLMDPNTSDMSLAEMDYKGAFSKGQILYGRVLWNPEQNLNSAYKLQLEKVYLCTGKDGYVPFFDPTGTIYNEGPQYGCIQPNKHLKHRFLLLDRNQPEVTDKYFHDVPFEAHFASELPDFHVVSNMPGVDGFTLKVDALYKVEAGHQWYLQVIYIIGPDTISGPRVQRSLTAPLRRNRRDLVEPDGQLILDDSLIYDNEGDQVKNGTNMKSLNLEMQELAVAASLSQTGASIGSALAAIMLLLLVFLVACFINRKCQKQRKKKPAEDILEEYPLNTKVEVPKRHPDRVEKNVNRHYCTVRNVNILSEPEAAYTFKGAKVKRLNLEVRVHNNLQDGTEV.

Residues 1–26 form the signal peptide; sequence MGVLKVWLGLALALAEFAVLPHHSEG. 5 consecutive VWFC domains span residues 27 to 88, 93 to 153, 157 to 217, 219 to 279, and 283 to 343; these read ACVY…PECV, GSCH…PVCV, KPCS…PQCS, RSCS…EECV, and GSCS…PECI. Residues 27 to 3901 lie on the Extracellular side of the membrane; that stretch reads ACVYQDSLLA…AASLSQTGAS (3875 aa). The residue at position 344 (S344) is a Phosphoserine. The VWFC 6 domain maps to 347-417; the sequence is GYCVYEETGE…VKGQCCPDCT (71 aa). N-linked (GlcNAc...) asparagine glycosylation is present at N361. FU repeat units follow at residues 409-460, 462-505, 507-553, 555-599, 602-647, 649-705, 708-753, 755-800, 803-852, 854-900, 903-948, 952-997, 999-1042, and 1046-1089; these read KGQC…GFYQ, GSLC…GFYQ, RHSC…GFYN, QGTC…GYYA, TGRC…GFYS, HGVC…HFYL, TGIC…GYFH, EGSC…EQFL, VGYC…GYYA, RGAC…GHYL, NHVC…QYYL, TNTC…SFYQ, SGLC…GYFA, and KHKC…GFSV. A glycan (N-linked (GlcNAc...) asparagine) is linked at N728. Residues N1093 and N1108 are each glycosylated (N-linked (GlcNAc...) asparagine). CSPG repeat units follow at residues 1102 to 1197, 1217 to 1308, 1329 to 1438, 1463 to 1559, 1595 to 1689, 1710 to 1810, and 1833 to 1936; these read TPSL…LKIS, APYV…LQAN, GLQL…FEVS, APKV…FSFA, PVFQ…ISVT, GPRL…FSVS, and PPVI…FYVS. A glycan (N-linked (GlcNAc...) asparagine) is linked at N1504. N1777 is a glycosylation site (N-linked (GlcNAc...) asparagine). 2 N-linked (GlcNAc...) asparagine glycosylation sites follow: N1948 and N1978. CSPG repeat units lie at residues 1957 to 2057, 2078 to 2177, 2199 to 2291, 2311 to 2404, and 2439 to 2536; these read EPPR…FSLT, TPHL…FDVV, PPVI…FTLS, SLPV…FTVS, and TPRI…FLVK. Calx-beta domains follow at residues 2543–2646, 2659–2770, 2784–2890, 2905–3007, and 3025–3129; these read VSDN…VELS, AKVI…IALA, AKVL…VFLS, IAIN…VYLG, and ATIT…LVLG. N2563, N2664, and N2682 each carry an N-linked (GlcNAc...) asparagine glycan. N-linked (GlcNAc...) asparagine glycosylation is found at N2908, N2985, N3070, N3218, N3676, and N3875. A helical transmembrane segment spans residues 3902-3922; sequence IGSALAAIMLLLLVFLVACFI. At 3923–4008 the chain is on the cytoplasmic side; sequence NRKCQKQRKK…HNNLQDGTEV (86 aa).

This sequence belongs to the FRAS1 family. In terms of tissue distribution, expressed in many adult tissues, with highest levels in kidney, pancreas and thalamus. Relatively high expression was also detected in fetal kidney and heart.

Its subcellular location is the cell membrane. In terms of biological role, involved in extracellular matrix organization. Required for the regulation of epidermal-basement membrane adhesion responsible for proper organogenesis during embryonic development. Involved in brain organization and function. The protein is Extracellular matrix organizing protein FRAS1 of Homo sapiens (Human).